Reading from the N-terminus, the 213-residue chain is Lysozyme g-like protein 2 (213 aa).

An N-terminal signal peptide occupies residues 1 to 19; the sequence is MVPSVVFWGLIALVGTAKG. 2 disulfides stabilise this stretch: C40–C93 and C54–C62. The active site involves E106.

Belongs to the glycosyl hydrolase 23 family.

It localises to the secreted. May act as a potent antibacterial protein that may play a role in the innate immunity. The protein is Lysozyme g-like protein 2 (Lyg2) of Mus musculus (Mouse).